The following is a 277-amino-acid chain: Large ribosomal subunit protein uL2 (277 aa).

Disordered regions lie at residues 32–58 (KSLTKGKVSRAGRDSSGRISVRRRGGG) and 225–277 (VAMN…RRNN).

The protein belongs to the universal ribosomal protein uL2 family. Part of the 50S ribosomal subunit. Forms a bridge to the 30S subunit in the 70S ribosome.

Its function is as follows. One of the primary rRNA binding proteins. Required for association of the 30S and 50S subunits to form the 70S ribosome, for tRNA binding and peptide bond formation. It has been suggested to have peptidyltransferase activity; this is somewhat controversial. Makes several contacts with the 16S rRNA in the 70S ribosome. The sequence is that of Large ribosomal subunit protein uL2 from Borrelia duttonii (strain Ly).